Here is a 317-residue protein sequence, read N- to C-terminus: Heme A synthase (317 aa).

The Cytoplasmic portion of the chain corresponds to 1 to 6; the sequence is MQRSLK. A helical membrane pass occupies residues 7 to 27; that stretch reads WFASATTLAMLFVLIGGALVT. Over 28 to 62 the chain is Extracellular; sequence KTGSGMGCGRSWPLCNGQWVPDHITPELIIELSHR. Cysteines 35 and 42 form a disulfide. Glu-58 is an active-site residue. Position 61 (His-61) interacts with heme o. The chain crosses the membrane as a helical span at residues 63–83; sequence LVSGLAGIMVLILSIWAWRAI. Residues 84–90 lie on the Cytoplasmic side of the membrane; sequence GHVQETK. A helical membrane pass occupies residues 91–111; it reads FLAVISFVFLVLQGLIGAAAV. The Extracellular portion of the chain corresponds to 112 to 121; that stretch reads VWGQSDFVLA. A helical membrane pass occupies residues 122–142; the sequence is LHFGISLISFAAVLLLTLLIF. Residue His-123 participates in heme o binding. Over 143–159 the chain is Cytoplasmic; the sequence is EIDKTFSAASLSLDGKM. Residues 160–180 traverse the membrane as a helical segment; it reads RFHIYGITIYSYIVVYTGALV. At 181-211 the chain is on the extracellular side; that stretch reads RHTNASLACPSWPLCAKTRLLPVQFHEWVQM. Cys-189 and Cys-195 form a disulfide bridge. The chain crosses the membrane as a helical span at residues 212 to 232; sequence GHRLAAAVIIIWIAAAAIHAV. His-213 serves as a coordination point for heme b. Residues 233–243 lie on the Cytoplasmic side of the membrane; that stretch reads RHYRRQPVIYY. Residues 244-264 traverse the membrane as a helical segment; sequence GWLIALLLVLAQMTTGALVVF. At 265 to 270 the chain is on the extracellular side; the sequence is TQLNLY. Residues 271-291 form a helical membrane-spanning segment; the sequence is IALAHAFFISCLFGVLSYLLL. His-275 provides a ligand contact to heme b. At 292 to 317 the chain is on the cytoplasmic side; the sequence is LALRTRRAPVKAADHSAGEAAPATLK.

This sequence belongs to the COX15/CtaA family. Type 1 subfamily. Interacts with CtaB. Heme b is required as a cofactor.

The protein resides in the cell membrane. The catalysed reaction is Fe(II)-heme o + 2 A + H2O = Fe(II)-heme a + 2 AH2. It participates in porphyrin-containing compound metabolism; heme A biosynthesis; heme A from heme O: step 1/1. Functionally, catalyzes the conversion of heme O to heme A by two successive hydroxylations of the methyl group at C8. The first hydroxylation forms heme I, the second hydroxylation results in an unstable dihydroxymethyl group, which spontaneously dehydrates, resulting in the formyl group of heme A. The polypeptide is Heme A synthase (Geobacillus kaustophilus (strain HTA426)).